Here is a 250-residue protein sequence, read N- to C-terminus: MEMKQISDSTIKITIQLEDLEKRGMEMADFLVPQEKTEEFFYTILDELEMPDNFLDSGMLSFRVTPKPDKVDVFVTKSKLDKNLSFEDLADLPDMDELSHMSPDEFLKTLEKSIFEKSKEDIEAVKSLETAEAEEREQLSQEAADEQSAENAERYIYYILRFEDIKAAAAFAQTVDYKIDLSELYKYDSAYYLTILVDVEGFPERYPAWLLAKMREFADDSDITRAVLQEHGHLLLVTDAVSGLQKVECL.

This sequence belongs to the MecA family. Homodimer.

Functionally, enables the recognition and targeting of unfolded and aggregated proteins to the ClpC protease or to other proteins involved in proteolysis. The protein is Adapter protein MecA of Streptococcus sanguinis (strain SK36).